The sequence spans 37 residues: MTAESMMFNGAVILMVLVLFGLAWGFLILKIQGGEAE.

A helical transmembrane segment spans residues 11-29; the sequence is AVILMVLVLFGLAWGFLIL.

Belongs to the PetM family. In terms of assembly, the 4 large subunits of the cytochrome b6-f complex are cytochrome b6, subunit IV (17 kDa polypeptide, PetD), cytochrome f and the Rieske protein, while the 4 small subunits are PetG, PetL, PetM and PetN. The complex functions as a dimer.

The protein resides in the cellular thylakoid membrane. Functionally, component of the cytochrome b6-f complex, which mediates electron transfer between photosystem II (PSII) and photosystem I (PSI), cyclic electron flow around PSI, and state transitions. This chain is Cytochrome b6-f complex subunit 7, found in Crocosphaera subtropica (strain ATCC 51142 / BH68) (Cyanothece sp. (strain ATCC 51142)).